A 418-amino-acid chain; its full sequence is MNYLIETIGCQMNVCDSDMLVSIFSAYGASKANNLSEADVVILNTCSVRSQAEQKAFSYLGRVKEFKQKNPCIKIVVIGCMAERLGPNIKKRFSSVDLIIGAKDIGNAALKIMNLFRTDYSAKKVNSEIKSKIVRYITIMRGCDNYCSYCAVPFVRGREVSINCETIVNECSSMVKNGAREIILLGQNVNSYQYEDVNFASLIKKTAAIENLERIRFMTNHPKDLSDDLIKIMATEPKVCPHIHIPMQSASDKILKAMNRKYSYEHYLGLIKKLRTAVPDVSVTTDIIVGFPGETDEDFEDTLKAVKTIRFGGLYVFRYSPRPDTKAAEMIDDVPFEEKKRRHAVVLKESNKISIEIVSEMLGSTQQVLAEEIKNGIIKARTKNGRKVFAEGRKEYIGKHINVNIKEAKINSLFGDIV.

Residues 1–118 form the MTTase N-terminal domain; the sequence is MNYLIETIGC…ALKIMNLFRT (118 aa). 6 residues coordinate [4Fe-4S] cluster: Cys-10, Cys-46, Cys-80, Cys-143, Cys-147, and Cys-150. The Radical SAM core domain maps to 129 to 356; the sequence is IKSKIVRYIT…LKESNKISIE (228 aa). Residues 359 to 418 form the TRAM domain; the sequence is SEMLGSTQQVLAEEIKNGIIKARTKNGRKVFAEGRKEYIGKHINVNIKEAKINSLFGDIV.

It belongs to the methylthiotransferase family. MiaB subfamily. Monomer. Requires [4Fe-4S] cluster as cofactor.

The protein resides in the cytoplasm. The catalysed reaction is N(6)-dimethylallyladenosine(37) in tRNA + (sulfur carrier)-SH + AH2 + 2 S-adenosyl-L-methionine = 2-methylsulfanyl-N(6)-dimethylallyladenosine(37) in tRNA + (sulfur carrier)-H + 5'-deoxyadenosine + L-methionine + A + S-adenosyl-L-homocysteine + 2 H(+). Functionally, catalyzes the methylthiolation of N6-(dimethylallyl)adenosine (i(6)A), leading to the formation of 2-methylthio-N6-(dimethylallyl)adenosine (ms(2)i(6)A) at position 37 in tRNAs that read codons beginning with uridine. The sequence is that of tRNA-2-methylthio-N(6)-dimethylallyladenosine synthase from Endomicrobium trichonymphae.